We begin with the raw amino-acid sequence, 1512 residues long: Lysophospholipase NTE1 (1512 aa).

The Cytoplasmic segment spans residues 1 to 48 (MAAPDAMTSLVKSSVALLSSAHESLPTSLAAMKTAETAPSSTFGILGR). The chain crosses the membrane as a helical span at residues 49–69 (VILSILSVLPTLLFWVSYTLP). Residues 70–83 (TWLFTLFSMSLTFT) are Lumenal-facing. A helical membrane pass occupies residues 84–104 (MNFTTLMLVLVFVVSTISYFV). Residues 105 to 1512 (RYRYLTMYAR…RTMAPRRASI (1408 aa)) are Cytoplasmic-facing. Disordered stretches follow at residues 204–230 (NREE…QAHR), 262–362 (RHDE…AHPD), 534–556 (TQMS…QHDV), and 740–770 (TEDD…KRSR). Acidic residues predominate over residues 208-217 (SDSDEDDGEL). Residues 268–291 (GPSSSTPMSPQHRPSMTRNSSFNM) are compositionally biased toward polar residues. The span at 343 to 358 (HSKQRRSPSRSTKPKS) shows a compositional bias: basic residues. Residues 537–549 (SRGTGRSGRSSFS) show a composition bias toward low complexity. A nucleoside 3',5'-cyclic phosphate is bound by residues 669 to 793 (LSAS…SNRS) and 830 to 950 (RLTT…IASR). Positions 751-761 (PTATNTSLRNG) are enriched in polar residues. Residues 1209 to 1373 (LVLGGGGARG…IDNLTVAHMK (165 aa)) form the PNPLA domain. Residues 1213-1218 (GGGARG) carry the GXGXXG motif. A GXSXG motif is present at residues 1240 to 1244 (GTSIG). Serine 1242 serves as the catalytic Nucleophile. Residue aspartate 1360 is the Proton acceptor of the active site. Positions 1360–1362 (DGG) match the DGA/G motif.

It belongs to the NTE family.

It localises to the endoplasmic reticulum membrane. The enzyme catalyses a 1-acyl-sn-glycero-3-phosphocholine + H2O = sn-glycerol 3-phosphocholine + a fatty acid + H(+). Its activity is regulated as follows. Inhibited by organophosphorus esters. Its function is as follows. Intracellular phospholipase B that catalyzes the double deacylation of phosphatidylcholine (PC) to glycerophosphocholine (GroPCho). Plays an important role in membrane lipid homeostasis. Responsible for the rapid PC turnover in response to inositol, elevated temperatures, or when choline is present in the growth medium. In Phaeosphaeria nodorum (strain SN15 / ATCC MYA-4574 / FGSC 10173) (Glume blotch fungus), this protein is Lysophospholipase NTE1 (NTE1).